A 360-amino-acid chain; its full sequence is GDSL esterase/lipase At2g31550 (360 aa).

An N-terminal signal peptide occupies residues 1–27; the sequence is MSTSKAITLTLFITTTLLASCDAAANA. The N-linked (GlcNAc...) asparagine glycan is linked to Asn-26. Ser-42 (nucleophile) is an active-site residue. N-linked (GlcNAc...) asparagine glycans are attached at residues Asn-104 and Asn-326. Active-site residues include Asp-334 and His-337.

The protein belongs to the 'GDSL' lipolytic enzyme family.

It localises to the secreted. The protein is GDSL esterase/lipase At2g31550 of Arabidopsis thaliana (Mouse-ear cress).